The sequence spans 171 residues: Terminase, small subunit (171 aa).

This sequence belongs to the P23virus small terminase family. Homononamer; forms a ring-like structure through which genomic DNA is translocated into the capsid. Heterodimer with the terminase large subunit; the active complex is probably heterooligomeric.

Its function is as follows. The terminase small subunit binds to the packaging initiation site and regulates the ATPase activity of the terminase large subunit. The terminase lies at a unique vertex of the procapsid and is composed of two subunits, a small terminase subunit involved in viral DNA recognition (packaging sequence), and a large terminase subunit. Both terminase subunits heterooligomerize and are docked on the portal protein to form the packaging machine. The chain is Terminase, small subunit from Thermus phage G20c (Thermus thermophilus phage G20c).